A 248-amino-acid polypeptide reads, in one-letter code: Small ribosomal subunit protein eS6 (248 aa).

The interval 213–248 is disordered; that stretch reads LLAQRKKESKAKREEAKRRRSASMRESKSSISSDKK. Positions 223–248 are enriched in basic and acidic residues; that stretch reads AKREEAKRRRSASMRESKSSISSDKK.

It belongs to the eukaryotic ribosomal protein eS6 family. Component of the small ribosomal subunit. Part of the small subunit (SSU) processome, composed of more than 70 proteins and the RNA chaperone small nucleolar RNA (snoRNA) U3. Ribosomal protein S6 is the major substrate of protein kinases in eukaryote ribosomes.

Its subcellular location is the cytoplasm. The protein localises to the nucleus. The protein resides in the nucleolus. Functionally, component of the 40S small ribosomal subunit. Plays an important role in controlling cell growth and proliferation through the selective translation of particular classes of mRNA. Part of the small subunit (SSU) processome, first precursor of the small eukaryotic ribosomal subunit. During the assembly of the SSU processome in the nucleolus, many ribosome biogenesis factors, an RNA chaperone and ribosomal proteins associate with the nascent pre-rRNA and work in concert to generate RNA folding, modifications, rearrangements and cleavage as well as targeted degradation of pre-ribosomal RNA by the RNA exosome. This Glossina morsitans morsitans (Savannah tsetse fly) protein is Small ribosomal subunit protein eS6 (RpS6).